The sequence spans 897 residues: Translation initiation factor IF-2 (897 aa).

Disordered stretches follow at residues 69–88 (RKTKSTISVQGTGGKNKEVQ) and 95–304 (RTYV…NAMK). The span at 101 to 161 (SALEDEQRQA…EEKARIEAQQ (61 aa)) shows a compositional bias: basic and acidic residues. Residues 162 to 179 (KARQAQQPAKAAGSTAQQ) show a composition bias toward low complexity. Composition is skewed to basic and acidic residues over residues 180-196 (EAEKMAKREAEELKRQQ), 203-217 (KAEELAAKKAEEARV), 226-239 (WAEEEAARAKESSD), and 277-286 (RREDDRDARN). Over residues 287 to 296 (PRARKGKRGK) the composition is skewed to basic residues. One can recognise a tr-type G domain in the interval 397–566 (PRAPVVTIMG…LIQSEVLELK (170 aa)). Residues 406-413 (GHVDHGKT) are G1. Residue 406–413 (GHVDHGKT) participates in GTP binding. The G2 stretch occupies residues 431–435 (GITQH). Residues 452-455 (DTPG) form a G3 region. Residues 452-456 (DTPGH) and 506-509 (NKID) contribute to the GTP site. Residues 506-509 (NKID) form a G4 region. The G5 stretch occupies residues 542–544 (SAK).

The protein belongs to the TRAFAC class translation factor GTPase superfamily. Classic translation factor GTPase family. IF-2 subfamily.

Its subcellular location is the cytoplasm. Functionally, one of the essential components for the initiation of protein synthesis. Protects formylmethionyl-tRNA from spontaneous hydrolysis and promotes its binding to the 30S ribosomal subunits. Also involved in the hydrolysis of GTP during the formation of the 70S ribosomal complex. The polypeptide is Translation initiation factor IF-2 (Aeromonas hydrophila subsp. hydrophila (strain ATCC 7966 / DSM 30187 / BCRC 13018 / CCUG 14551 / JCM 1027 / KCTC 2358 / NCIMB 9240 / NCTC 8049)).